The chain runs to 499 residues: Endoglucanase (499 aa).

The first 29 residues, 1–29, serve as a signal peptide directing secretion; that stretch reads MKRSISIFITCLLIAVLTMGGLLPSPASA. Substrate-binding positions include histidine 65, 69 to 70, tyrosine 96, and histidine 131; that span reads WY. The Proton donor role is filled by glutamate 169. Tyrosine 231 serves as a coordination point for substrate. Glutamate 257 serves as the catalytic Nucleophile. Residues 263–264, tryptophan 291, and 296–298 each bind substrate; these read AS and KQE. The segment covering 330-340 has biased composition (basic and acidic residues); sequence RGTKDSTKDVP. A disordered region spans residues 330–353; that stretch reads RGTKDSTKDVPETPAQDNPTQEKG. Residues 350-499 enclose the CBM3 domain; sequence QEKGVSVQYK…GKLIWGTEPN (150 aa).

It belongs to the glycosyl hydrolase 5 (cellulase A) family.

It catalyses the reaction Endohydrolysis of (1-&gt;4)-beta-D-glucosidic linkages in cellulose, lichenin and cereal beta-D-glucans.. This is Endoglucanase (bglC) from Bacillus subtilis.